Here is a 136-residue protein sequence, read N- to C-terminus: Ubiquinol-cytochrome c reductase complex assembly factor 2 (136 aa).

A mitochondrion-targeting transit peptide spans 1 to 13 (MAALRYRRFLKLC).

As to quaternary structure, interacts with UQCC1. Forms a complex, named COMB/coordinator of mitochondrial CYTB biogenesis, composed of UQCC1, UQCC2, UQCC4, UQCC5 and UQCC6; stabilizes nascent cytochrome b/MT-CYB and promotes its membrane insertion. Forms a complex, named COMA, composed of UQCC1, UQCC2 and UQCC4; activates MT-CYB translation. Forms a complex, named COMC, composed of UQCC1, UQCC2; UQCC3 and UQCC4; mediates MT-CYB hemylation and association with the first nuclear-encoded CIII subunit UQCRQ. As to expression, widely expressed with highest levels in brain, liver, kidney, heart, skeletal muscle, thymus, testis and pancreas (at protein level).

The protein localises to the mitochondrion matrix. The protein resides in the mitochondrion nucleoid. Its subcellular location is the mitochondrion. It is found in the mitochondrion intermembrane space. It localises to the mitochondrion inner membrane. In terms of biological role, required for the assembly of the ubiquinol-cytochrome c reductase complex (mitochondrial respiratory chain complex III or cytochrome b-c1 complex). Plays a role in the modulation of respiratory chain activities such as oxygen consumption and ATP production and via its modulation of the respiratory chain activity can regulate skeletal muscle differentiation and insulin secretion by pancreatic beta-cells. Involved in cytochrome b translation and/or stability. This Mus musculus (Mouse) protein is Ubiquinol-cytochrome c reductase complex assembly factor 2 (Uqcc2).